A 467-amino-acid chain; its full sequence is Siroheme synthase (467 aa).

The segment at 1–203 (METLPIFMKL…GQEEAARHAM (203 aa)) is precorrin-2 dehydrogenase /sirohydrochlorin ferrochelatase. NAD(+) is bound by residues 22–23 (EI) and 43–44 (PE). The residue at position 128 (serine 128) is a Phosphoserine. Positions 216 to 467 (GEVYLVGGGP…APSPEVVSAG (252 aa)) are uroporphyrinogen-III C-methyltransferase. Proline 225 contributes to the S-adenosyl-L-methionine binding site. The Proton acceptor role is filled by aspartate 248. Lysine 270 serves as the catalytic Proton donor. Residues 301-303 (GGD), isoleucine 306, 331-332 (TA), methionine 383, and glycine 412 contribute to the S-adenosyl-L-methionine site.

This sequence in the N-terminal section; belongs to the precorrin-2 dehydrogenase / sirohydrochlorin ferrochelatase family. The protein in the C-terminal section; belongs to the precorrin methyltransferase family.

The enzyme catalyses uroporphyrinogen III + 2 S-adenosyl-L-methionine = precorrin-2 + 2 S-adenosyl-L-homocysteine + H(+). It carries out the reaction precorrin-2 + NAD(+) = sirohydrochlorin + NADH + 2 H(+). It catalyses the reaction siroheme + 2 H(+) = sirohydrochlorin + Fe(2+). It participates in cofactor biosynthesis; adenosylcobalamin biosynthesis; precorrin-2 from uroporphyrinogen III: step 1/1. It functions in the pathway cofactor biosynthesis; adenosylcobalamin biosynthesis; sirohydrochlorin from precorrin-2: step 1/1. Its pathway is porphyrin-containing compound metabolism; siroheme biosynthesis; precorrin-2 from uroporphyrinogen III: step 1/1. The protein operates within porphyrin-containing compound metabolism; siroheme biosynthesis; siroheme from sirohydrochlorin: step 1/1. It participates in porphyrin-containing compound metabolism; siroheme biosynthesis; sirohydrochlorin from precorrin-2: step 1/1. Multifunctional enzyme that catalyzes the SAM-dependent methylations of uroporphyrinogen III at position C-2 and C-7 to form precorrin-2 via precorrin-1. Then it catalyzes the NAD-dependent ring dehydrogenation of precorrin-2 to yield sirohydrochlorin. Finally, it catalyzes the ferrochelation of sirohydrochlorin to yield siroheme. The sequence is that of Siroheme synthase from Methylobacillus flagellatus (strain ATCC 51484 / DSM 6875 / VKM B-1610 / KT).